The primary structure comprises 156 residues: Small ribosomal subunit protein uS7 (156 aa).

It belongs to the universal ribosomal protein uS7 family. As to quaternary structure, part of the 30S ribosomal subunit. Contacts proteins S9 and S11.

Its function is as follows. One of the primary rRNA binding proteins, it binds directly to 16S rRNA where it nucleates assembly of the head domain of the 30S subunit. Is located at the subunit interface close to the decoding center, probably blocks exit of the E-site tRNA. The chain is Small ribosomal subunit protein uS7 from Thermodesulfovibrio yellowstonii (strain ATCC 51303 / DSM 11347 / YP87).